The following is a 432-amino-acid chain: Glutamate-1-semialdehyde 2,1-aminomutase (432 aa).

Lysine 271 is subject to N6-(pyridoxal phosphate)lysine.

Belongs to the class-III pyridoxal-phosphate-dependent aminotransferase family. HemL subfamily. In terms of assembly, homodimer. Pyridoxal 5'-phosphate serves as cofactor.

Its subcellular location is the cytoplasm. The catalysed reaction is (S)-4-amino-5-oxopentanoate = 5-aminolevulinate. It functions in the pathway porphyrin-containing compound metabolism; protoporphyrin-IX biosynthesis; 5-aminolevulinate from L-glutamyl-tRNA(Glu): step 2/2. It participates in porphyrin-containing compound metabolism; chlorophyll biosynthesis. The polypeptide is Glutamate-1-semialdehyde 2,1-aminomutase (Prochlorococcus marinus (strain NATL2A)).